The sequence spans 385 residues: Spermidine/putrescine import ATP-binding protein PotA (385 aa).

The region spanning 27-257 is the ABC transporter domain; the sequence is ASFRAVSKHY…PANLFVAQFA (231 aa). 59–66 lines the ATP pocket; sequence GPSGCGKT.

It belongs to the ABC transporter superfamily. Spermidine/putrescine importer (TC 3.A.1.11.1) family. As to quaternary structure, the complex is composed of two ATP-binding proteins (PotA), two transmembrane proteins (PotB and PotC) and a solute-binding protein (PotD).

The protein resides in the cell inner membrane. The catalysed reaction is ATP + H2O + polyamine-[polyamine-binding protein]Side 1 = ADP + phosphate + polyamineSide 2 + [polyamine-binding protein]Side 1.. Functionally, part of the ABC transporter complex PotABCD involved in spermidine/putrescine import. Responsible for energy coupling to the transport system. This is Spermidine/putrescine import ATP-binding protein PotA from Methylococcus capsulatus (strain ATCC 33009 / NCIMB 11132 / Bath).